A 515-amino-acid chain; its full sequence is 2-isopropylmalate synthase (515 aa).

The region spanning 5-267 (VIIFDTTLRD…HTGLDHKEIH (263 aa)) is the Pyruvate carboxyltransferase domain. Residues Asp14, His202, His204, and Asn238 each coordinate Mn(2+). Residues 392-515 (KLNYLSVQSG…EMKQQKFATV (124 aa)) form a regulatory domain region.

It belongs to the alpha-IPM synthase/homocitrate synthase family. LeuA type 1 subfamily. As to quaternary structure, homodimer. Requires Mn(2+) as cofactor.

It localises to the cytoplasm. The catalysed reaction is 3-methyl-2-oxobutanoate + acetyl-CoA + H2O = (2S)-2-isopropylmalate + CoA + H(+). It functions in the pathway amino-acid biosynthesis; L-leucine biosynthesis; L-leucine from 3-methyl-2-oxobutanoate: step 1/4. Its function is as follows. Catalyzes the condensation of the acetyl group of acetyl-CoA with 3-methyl-2-oxobutanoate (2-ketoisovalerate) to form 3-carboxy-3-hydroxy-4-methylpentanoate (2-isopropylmalate). This Vibrio atlanticus (strain LGP32) (Vibrio splendidus (strain Mel32)) protein is 2-isopropylmalate synthase.